Reading from the N-terminus, the 476-residue chain is Bifunctional protein HldE (476 aa).

Residues 1–318 (MFQYSAEFKQ…ENAIHGRSNT (318 aa)) are ribokinase. 195 to 198 (NMSE) lines the ATP pocket. The active site involves aspartate 264. The cytidylyltransferase stretch occupies residues 344–476 (MTNGCFDILH…VISKIQQLKD (133 aa)).

The protein in the N-terminal section; belongs to the carbohydrate kinase PfkB family. This sequence in the C-terminal section; belongs to the cytidylyltransferase family. Homodimer.

It catalyses the reaction D-glycero-beta-D-manno-heptose 7-phosphate + ATP = D-glycero-beta-D-manno-heptose 1,7-bisphosphate + ADP + H(+). The catalysed reaction is D-glycero-beta-D-manno-heptose 1-phosphate + ATP + H(+) = ADP-D-glycero-beta-D-manno-heptose + diphosphate. It participates in nucleotide-sugar biosynthesis; ADP-L-glycero-beta-D-manno-heptose biosynthesis; ADP-L-glycero-beta-D-manno-heptose from D-glycero-beta-D-manno-heptose 7-phosphate: step 1/4. Its pathway is nucleotide-sugar biosynthesis; ADP-L-glycero-beta-D-manno-heptose biosynthesis; ADP-L-glycero-beta-D-manno-heptose from D-glycero-beta-D-manno-heptose 7-phosphate: step 3/4. The protein operates within bacterial outer membrane biogenesis; LPS core biosynthesis. Catalyzes the phosphorylation of D-glycero-D-manno-heptose 7-phosphate at the C-1 position to selectively form D-glycero-beta-D-manno-heptose-1,7-bisphosphate. Its function is as follows. Catalyzes the ADP transfer from ATP to D-glycero-beta-D-manno-heptose 1-phosphate, yielding ADP-D-glycero-beta-D-manno-heptose. The protein is Bifunctional protein HldE of Pasteurella multocida (strain Pm70).